Consider the following 192-residue polypeptide: GTP-dependent dephospho-CoA kinase (192 aa).

GTP contacts are provided by D49, V50, V51, D68, K70, and E127.

It belongs to the GTP-dependent DPCK family.

It carries out the reaction 3'-dephospho-CoA + GTP = GDP + CoA + H(+). It participates in cofactor biosynthesis; coenzyme A biosynthesis. Catalyzes the GTP-dependent phosphorylation of the 3'-hydroxyl group of dephosphocoenzyme A to form coenzyme A (CoA). In Halorubrum lacusprofundi (strain ATCC 49239 / DSM 5036 / JCM 8891 / ACAM 34), this protein is GTP-dependent dephospho-CoA kinase.